Consider the following 704-residue polypeptide: Polyribonucleotide nucleotidyltransferase (704 aa).

Mg(2+)-binding residues include aspartate 485 and aspartate 491. Residues 552 to 611 enclose the KH domain; it reads PRIYTMKIDPKKIKDVIGKGGATIRALTEETGTSIDIDDDGTVKIAAVDGNAVKTVMARI. Residues 621–689 enclose the S1 motif domain; that stretch reads GAVYTGKVTR…RQGRIRLTMR (69 aa).

This sequence belongs to the polyribonucleotide nucleotidyltransferase family. As to quaternary structure, component of the RNA degradosome, which is a multiprotein complex involved in RNA processing and mRNA degradation. The cofactor is Mg(2+).

It localises to the cytoplasm. The enzyme catalyses RNA(n+1) + phosphate = RNA(n) + a ribonucleoside 5'-diphosphate. Functionally, involved in mRNA degradation. Catalyzes the phosphorolysis of single-stranded polyribonucleotides processively in the 3'- to 5'-direction. In Mannheimia succiniciproducens (strain KCTC 0769BP / MBEL55E), this protein is Polyribonucleotide nucleotidyltransferase.